Here is an 885-residue protein sequence, read N- to C-terminus: Glycerol-3-phosphate acyltransferase (885 aa).

The span at 1–17 (MPEQNPLPFPDGQPSPP) shows a compositional bias: pro residues. Residues 1–26 (MPEQNPLPFPDGQPSPPSTAAADTGA) form a disordered region. The HXXXXD motif motif lies at 362–367 (HRSHMD).

This sequence belongs to the GPAT/DAPAT family.

It localises to the cell inner membrane. The enzyme catalyses sn-glycerol 3-phosphate + an acyl-CoA = a 1-acyl-sn-glycero-3-phosphate + CoA. It functions in the pathway phospholipid metabolism; CDP-diacylglycerol biosynthesis; CDP-diacylglycerol from sn-glycerol 3-phosphate: step 1/3. The chain is Glycerol-3-phosphate acyltransferase from Xanthomonas axonopodis pv. citri (strain 306).